Consider the following 319-residue polypeptide: Molybdenum cofactor biosynthesis bifunctional protein (319 aa).

The segment at 1-145 is molybdenum cofactor biosynthesis protein C; it reads MIDVGDKAVT…GKSGHWQRPA (145 aa). Substrate is bound by residues 61-63 and 99-100; these read LCH and ME. Aspartate 114 is a catalytic residue. The interval 146 to 319 is molybdenum cofactor biosynthesis protein B; that stretch reads IAPDVAPTGA…KGADHGTVKG (174 aa).

It in the N-terminal section; belongs to the MoaC family. The protein in the C-terminal section; belongs to the MoaB/Mog family.

It carries out the reaction (8S)-3',8-cyclo-7,8-dihydroguanosine 5'-triphosphate = cyclic pyranopterin phosphate + diphosphate. Its pathway is cofactor biosynthesis; molybdopterin biosynthesis. In terms of biological role, catalyzes the conversion of (8S)-3',8-cyclo-7,8-dihydroguanosine 5'-triphosphate to cyclic pyranopterin monophosphate (cPMP). This Synechococcus elongatus (strain ATCC 33912 / PCC 7942 / FACHB-805) (Anacystis nidulans R2) protein is Molybdenum cofactor biosynthesis bifunctional protein (moaCB).